Reading from the N-terminus, the 448-residue chain is MSASAVNVTPGRNVVVVGTQWGDEGKGKIVDWLTDHAQGVVRFQGGHNAGHTLIIGGKKTILRLIPSGIMREGVACYIGNGVVLSPEALFKEIGELEEAGLSVRERLFISEATTLILPYHIAIDQAREARRGAGKIGTTGRGIGPAYEDKVGRRALRVQDLFDARTFADRLRENLDFHNFVLTQYLGGAAVDFQATLDTMLGYADRLKPMVTDVSRRLYEENHAGRNLLFEGAQGTLLDIDHGTYPFVTSSNCVAGAAAAGAGVGPQKLDYILGITKAYCTRVGSGPFPSELYDADNPSRQDQIGITLANVGKEFGSVTGRPRRTGWLDAAALRRSIQINGVSGLCMTKLDVLDGLDEVKLCVGYKIDGEDVDLLPRGAAEVARCEPVYETFGGWKESTVGIDSWDALPANARAYLTRVQEVAGVPIDMVSTGPDRDETILLRHPFKV.

Residues 22 to 28 (GDEGKGK) and 50 to 52 (GHT) each bind GTP. Asp23 acts as the Proton acceptor in catalysis. Mg(2+) contacts are provided by Asp23 and Gly50. IMP is bound by residues 23 to 26 (DEGK), 48 to 51 (NAGH), Thr139, Arg153, Gln234, Thr249, and Arg321. His51 functions as the Proton donor in the catalytic mechanism. 317 to 323 (SVTGRPR) provides a ligand contact to substrate. Residues Arg323, 349–351 (KLD), and 431–433 (STG) each bind GTP.

It belongs to the adenylosuccinate synthetase family. In terms of assembly, homodimer. The cofactor is Mg(2+).

The protein localises to the cytoplasm. It catalyses the reaction IMP + L-aspartate + GTP = N(6)-(1,2-dicarboxyethyl)-AMP + GDP + phosphate + 2 H(+). It participates in purine metabolism; AMP biosynthesis via de novo pathway; AMP from IMP: step 1/2. Functionally, plays an important role in the de novo pathway of purine nucleotide biosynthesis. Catalyzes the first committed step in the biosynthesis of AMP from IMP. The polypeptide is Adenylosuccinate synthetase (Burkholderia mallei (strain NCTC 10247)).